A 477-amino-acid polypeptide reads, in one-letter code: Fibrinogen beta chain (477 aa).

The segment at 1-76 (EDLSLVGQPE…ASPRPQEAQK (76 aa)) is disordered. The residue at position 13 (tyrosine 13) is a Sulfotyrosine. Asparagine 27 is a glycosylation site (N-linked (GlcNAc...) asparagine). A compositionally biased stretch (basic residues) spans 44-55 (RVRRPPLRHRRL). 3 disulfide bridges follow: cysteine 220-cysteine 304, cysteine 230-cysteine 259, and cysteine 412-cysteine 425. The Fibrinogen C-terminal domain maps to 221–476 (RVPVVSGMHC…QMAMKLRPKW (256 aa)).

In terms of assembly, heterohexamer; disulfide linked. Contains 2 sets of 3 non-identical chains (alpha, beta and gamma). The 2 heterotrimers are in head to head conformation with the N-termini in a small central domain. Conversion of fibrinogen to fibrin is triggered by thrombin, which cleaves fibrinopeptides A and B from alpha and beta chains, and thus exposes the N-terminal polymerization sites responsible for the formation of the soft clot. The soft clot is converted into the hard clot by factor XIIIA which catalyzes the epsilon-(gamma-glutamyl)lysine cross-linking between gamma chains (stronger) and between alpha chains (weaker) of different monomers.

The protein resides in the secreted. Its function is as follows. Fibrinogen has a double function: yielding monomers that polymerize into fibrin and acting as a cofactor in platelet aggregation. This Petromyzon marinus (Sea lamprey) protein is Fibrinogen beta chain.